The following is a 293-amino-acid chain: Nucleotide-binding protein HRM2_27900 (293 aa).

11–18 (GLSGSGKS) contributes to the ATP binding site. 62–65 (DIRA) contacts GTP.

This sequence belongs to the RapZ-like family.

In terms of biological role, displays ATPase and GTPase activities. The chain is Nucleotide-binding protein HRM2_27900 from Desulforapulum autotrophicum (strain ATCC 43914 / DSM 3382 / VKM B-1955 / HRM2) (Desulfobacterium autotrophicum).